Reading from the N-terminus, the 259-residue chain is Thiazole synthase (259 aa).

Lys-98 serves as the catalytic Schiff-base intermediate with DXP. 1-deoxy-D-xylulose 5-phosphate contacts are provided by residues Gly-159, 185-186 (AG), and 207-208 (NS).

This sequence belongs to the ThiG family. As to quaternary structure, homotetramer. Forms heterodimers with either ThiH or ThiS.

The protein localises to the cytoplasm. The catalysed reaction is [ThiS sulfur-carrier protein]-C-terminal-Gly-aminoethanethioate + 2-iminoacetate + 1-deoxy-D-xylulose 5-phosphate = [ThiS sulfur-carrier protein]-C-terminal Gly-Gly + 2-[(2R,5Z)-2-carboxy-4-methylthiazol-5(2H)-ylidene]ethyl phosphate + 2 H2O + H(+). The protein operates within cofactor biosynthesis; thiamine diphosphate biosynthesis. Its function is as follows. Catalyzes the rearrangement of 1-deoxy-D-xylulose 5-phosphate (DXP) to produce the thiazole phosphate moiety of thiamine. Sulfur is provided by the thiocarboxylate moiety of the carrier protein ThiS. In vitro, sulfur can be provided by H(2)S. This Chlorobium limicola (strain DSM 245 / NBRC 103803 / 6330) protein is Thiazole synthase.